The following is a 504-amino-acid chain: Putative glycerol-3-phosphate transporter 2 (504 aa).

12 consecutive transmembrane segments (helical) span residues leucine 31 to phenylalanine 51, alanine 84 to alanine 104, phenylalanine 116 to tryptophan 136, phenylalanine 145 to alanine 165, methionine 178 to alanine 198, phenylalanine 210 to valine 230, isoleucine 280 to tyrosine 302, glycine 324 to isoleucine 344, alanine 352 to phenylalanine 372, threonine 378 to isoleucine 398, alanine 424 to isoleucine 444, and valine 452 to isoleucine 472.

It belongs to the major facilitator superfamily. Organophosphate:Pi antiporter (OPA) (TC 2.A.1.4) family. In terms of tissue distribution, expressed in the root-hair differentiation zone.

The protein localises to the membrane. This Arabidopsis thaliana (Mouse-ear cress) protein is Putative glycerol-3-phosphate transporter 2.